A 162-amino-acid chain; its full sequence is Transcription elongation factor GreB (162 aa).

Residues 52 to 73 are a coiled coil; that stretch reads KKLLREIDRRVRYLRKRLEDVK.

It belongs to the GreA/GreB family. GreB subfamily.

Functionally, necessary for efficient RNA polymerase transcription elongation past template-encoded arresting sites. The arresting sites in DNA have the property of trapping a certain fraction of elongating RNA polymerases that pass through, resulting in locked ternary complexes. Cleavage of the nascent transcript by cleavage factors such as GreA or GreB allows the resumption of elongation from the new 3'terminus. GreB releases sequences of up to 9 nucleotides in length. The protein is Transcription elongation factor GreB of Pseudomonas putida (strain ATCC 47054 / DSM 6125 / CFBP 8728 / NCIMB 11950 / KT2440).